Reading from the N-terminus, the 159-residue chain is MTTKAIYPGTFDPLTNGHLDLLTRASRLFDHVVLAIAASPSKQTLFTLDERVALAKGATEHLSNVDVIGFSDLMAHFAQQQNANILVRGLRAVADFEYELQLAKMNHHLMPTLESVFLMPSEEWSFISSSLVKEVARHGGDVSHFLPDAIVSALMEKLR.

Position 10 (threonine 10) interacts with substrate. ATP-binding positions include 10-11 (TF) and histidine 18. Lysine 42, methionine 74, and arginine 88 together coordinate substrate. ATP contacts are provided by residues 89 to 91 (GLR), glutamate 99, and 124 to 130 (WSFISSS).

This sequence belongs to the bacterial CoaD family. As to quaternary structure, homohexamer. Requires Mg(2+) as cofactor.

It localises to the cytoplasm. The catalysed reaction is (R)-4'-phosphopantetheine + ATP + H(+) = 3'-dephospho-CoA + diphosphate. It participates in cofactor biosynthesis; coenzyme A biosynthesis; CoA from (R)-pantothenate: step 4/5. Functionally, reversibly transfers an adenylyl group from ATP to 4'-phosphopantetheine, yielding dephospho-CoA (dPCoA) and pyrophosphate. The chain is Phosphopantetheine adenylyltransferase from Pectobacterium carotovorum subsp. carotovorum (strain PC1).